Here is a 100-residue protein sequence, read N- to C-terminus: Small ribosomal subunit protein uS14c (100 aa).

This sequence belongs to the universal ribosomal protein uS14 family. Part of the 30S ribosomal subunit.

The protein localises to the plastid. It localises to the chloroplast. Functionally, binds 16S rRNA, required for the assembly of 30S particles. The chain is Small ribosomal subunit protein uS14c from Rhodomonas salina (Cryptomonas salina).